The chain runs to 345 residues: 3-dehydroquinate synthase (345 aa).

NAD(+) contacts are provided by residues 62 to 67 (DGEEYK), 96 to 100 (GVISD), 120 to 121 (TT), Lys133, Lys142, and 160 to 163 (FLKT). Zn(2+) contacts are provided by Glu175, His233, and His250.

This sequence belongs to the sugar phosphate cyclases superfamily. Dehydroquinate synthase family. It depends on Co(2+) as a cofactor. Requires Zn(2+) as cofactor. NAD(+) serves as cofactor.

The protein localises to the cytoplasm. It carries out the reaction 7-phospho-2-dehydro-3-deoxy-D-arabino-heptonate = 3-dehydroquinate + phosphate. It functions in the pathway metabolic intermediate biosynthesis; chorismate biosynthesis; chorismate from D-erythrose 4-phosphate and phosphoenolpyruvate: step 2/7. Catalyzes the conversion of 3-deoxy-D-arabino-heptulosonate 7-phosphate (DAHP) to dehydroquinate (DHQ). The sequence is that of 3-dehydroquinate synthase from Campylobacter concisus (strain 13826).